The following is a 310-amino-acid chain: Porphobilinogen deaminase (310 aa).

At Cys-242 the chain carries S-(dipyrrolylmethanemethyl)cysteine.

The protein belongs to the HMBS family. In terms of assembly, monomer. Dipyrromethane serves as cofactor.

It carries out the reaction 4 porphobilinogen + H2O = hydroxymethylbilane + 4 NH4(+). It participates in porphyrin-containing compound metabolism; protoporphyrin-IX biosynthesis; coproporphyrinogen-III from 5-aminolevulinate: step 2/4. Tetrapolymerization of the monopyrrole PBG into the hydroxymethylbilane pre-uroporphyrinogen in several discrete steps. The polypeptide is Porphobilinogen deaminase (Shewanella sp. (strain ANA-3)).